The chain runs to 186 residues: Periplasmic nitrate reductase, electron transfer subunit (186 aa).

The N-terminal stretch at 1–20 is a signal peptide; that stretch reads MKTSKLNFLTLVASTGLALA. H87, C102, C105, H106, H123, C144, C147, and H148 together coordinate heme c.

Belongs to the NapB family. In terms of assembly, component of the periplasmic nitrate reductase NapAB complex composed of NapA and NapB. Post-translationally, binds 2 heme C groups per subunit.

Its subcellular location is the periplasm. Electron transfer subunit of the periplasmic nitrate reductase complex NapAB. Transfers electrons to NapA subunit, thus allowing electron flow between membrane and periplasm. Essential for periplasmic nitrate reduction with nitrate as the terminal electron acceptor. The sequence is that of Periplasmic nitrate reductase, electron transfer subunit from Wolinella succinogenes (strain ATCC 29543 / DSM 1740 / CCUG 13145 / JCM 31913 / LMG 7466 / NCTC 11488 / FDC 602W) (Vibrio succinogenes).